Here is a 291-residue protein sequence, read N- to C-terminus: Protein SpdB (291 aa).

The next 3 helical transmembrane spans lie at 24-44 (VVVIVMWLGEAMPWAVALVVG), 71-91 (ITGVGWGFGAVATGVLVAHAL), and 99-119 (WLAVAWLPLAAKALWLVHGLW).

The protein localises to the cell membrane. Its function is as follows. Involved in plasmid transfer. The polypeptide is Protein SpdB (spdB) (Streptomyces lividans).